Consider the following 715-residue polypeptide: Ribosomal RNA large subunit methyltransferase K/L (715 aa).

Positions 47–158 constitute a THUMP domain; it reads LGYKISLWTR…RDNVTIFLDF (112 aa).

Belongs to the methyltransferase superfamily. RlmKL family.

The protein resides in the cytoplasm. The enzyme catalyses guanosine(2445) in 23S rRNA + S-adenosyl-L-methionine = N(2)-methylguanosine(2445) in 23S rRNA + S-adenosyl-L-homocysteine + H(+). The catalysed reaction is guanosine(2069) in 23S rRNA + S-adenosyl-L-methionine = N(2)-methylguanosine(2069) in 23S rRNA + S-adenosyl-L-homocysteine + H(+). Specifically methylates the guanine in position 2445 (m2G2445) and the guanine in position 2069 (m7G2069) of 23S rRNA. The chain is Ribosomal RNA large subunit methyltransferase K/L from Colwellia psychrerythraea (strain 34H / ATCC BAA-681) (Vibrio psychroerythus).